Consider the following 191-residue polypeptide: Elongation factor P-like protein (191 aa).

It belongs to the elongation factor P family.

This Shewanella sediminis (strain HAW-EB3) protein is Elongation factor P-like protein.